A 305-amino-acid chain; its full sequence is Ornithine carbamoyltransferase (305 aa).

Residues 54 to 57 (STRT), Gln81, Arg105, and 132 to 135 (HPCQ) each bind carbamoyl phosphate. L-ornithine-binding positions include Asn163, Asp220, and 224–225 (SM). Residues 260 to 261 (CL) and Arg288 each bind carbamoyl phosphate.

Belongs to the aspartate/ornithine carbamoyltransferase superfamily. OTCase family.

The protein localises to the cytoplasm. It carries out the reaction carbamoyl phosphate + L-ornithine = L-citrulline + phosphate + H(+). It participates in amino-acid biosynthesis; L-arginine biosynthesis; L-arginine from L-ornithine and carbamoyl phosphate: step 1/3. Reversibly catalyzes the transfer of the carbamoyl group from carbamoyl phosphate (CP) to the N(epsilon) atom of ornithine (ORN) to produce L-citrulline. In Chromohalobacter salexigens (strain ATCC BAA-138 / DSM 3043 / CIP 106854 / NCIMB 13768 / 1H11), this protein is Ornithine carbamoyltransferase.